The primary structure comprises 371 residues: Alanine dehydrogenase (371 aa).

Substrate-binding residues include R15 and K75. Residue H96 is the Proton donor/acceptor of the active site. Residues S134, D198, R203, S220, 239-240 (VL), 267-270 (VAID), K279, and 298-301 (VANM) contribute to the NAD(+) site. Catalysis depends on D270, which acts as the Proton donor/acceptor.

This sequence belongs to the AlaDH/PNT family. Mg(2+) serves as cofactor.

It catalyses the reaction L-alanine + NAD(+) + H2O = pyruvate + NH4(+) + NADH + H(+). It functions in the pathway amino-acid degradation; L-alanine degradation via dehydrogenase pathway; NH(3) and pyruvate from L-alanine: step 1/1. Catalyzes the reversible reductive amination of pyruvate to L-alanine. The polypeptide is Alanine dehydrogenase (Halomonas elongata (strain ATCC 33173 / DSM 2581 / NBRC 15536 / NCIMB 2198 / 1H9)).